The sequence spans 394 residues: Sorting nexin-3 (394 aa).

2 disordered regions span residues 1 to 82 and 116 to 226; these read MAFY…FGGA and LGGA…SATA. Low complexity-rich tracts occupy residues 31–82 and 131–178; these read AAPG…FGGA and AHSS…AFPS. A compositionally biased stretch (polar residues) spans 179–207; that stretch reads GVSTSQYQPTSQGAQGASRFQSHTPSTLL. The 118-residue stretch at 272–389 folds into the PX domain; that stretch reads NFLEVEVRSP…AAFLQDSGWS (118 aa). A 1,2-diacyl-sn-glycero-3-phospho-(1D-myo-inositol-3-phosphate)-binding residues include Arg315, Ser317, Lys341, Arg346, and Arg355.

Belongs to the sorting nexin family.

Its subcellular location is the cytoplasm. It is found in the golgi apparatus membrane. It localises to the prevacuolar compartment membrane. Functionally, required for retention of late Golgi membrane proteins. Component of the retrieval machinery that functions by direct interaction with the cytosolic tails of certain TGN membrane proteins during the sorting/budding process at the prevacuolar compartment. Binds phosphatidylinositol 3-phosphate (PtdIns(P3)). This Mycosarcoma maydis (Corn smut fungus) protein is Sorting nexin-3 (SNX3).